Reading from the N-terminus, the 598-residue chain is MKHIRNFCIIAHIDHGKSTLADRLIQSCGGVTQREFHDQMLDSMDIERERGITIKSNTVTLNYTAKDGEAYQLNLIDTPGHVDFSHEVRRSLMACEGALMVVDASQGVEAQTVANLYLALEYDLELLPVINKIDLPAADVDRVRGEIDEDLGLDPFVAIPVSAKTGQGIEDVLEGIVKNLPAPKGDPKAPLKALVFDAFFDKYRGVILQCRVMEGTLKPKDEIHFMHADRDFTVDELGYNQFKLVPKKELTAGEVGYIVAGVKTVQDIEIGDTITLANRPADEPIPGYQPARQVVFSSVYPMSTDEYQDLTKALEKLSINDAALTFEKDSSAALGFGYRCGFLGLLHLDVVQERLQREFDIGLVISAPSVQYKIKLKDGTTQDVDNPTYWPDPSTIDSVSEPYIKAQILIPEEYVGPVMELCREHRSESQTMNYLSAGRLEVTSEMPLGEVLFDFYGKLKMITRGYGSFDYVPIEYRKTDIVKVDILVNKEPVDALAYLVHRDKSRARAMHYCEQLAEAIPRHQFKIPIQGAIGGTVIARTTIAPYRKDVTAKLYGGDVSRKKKLLEKQKKGKAKMKQFGSVNIPQKAFISVLRTDKD.

A tr-type G domain is found at 2 to 184 (KHIRNFCIIA…GIVKNLPAPK (183 aa)). Residues 14–19 (DHGKST) and 131–134 (NKID) contribute to the GTP site.

It belongs to the TRAFAC class translation factor GTPase superfamily. Classic translation factor GTPase family. LepA subfamily.

The protein localises to the cell inner membrane. The catalysed reaction is GTP + H2O = GDP + phosphate + H(+). Functionally, required for accurate and efficient protein synthesis under certain stress conditions. May act as a fidelity factor of the translation reaction, by catalyzing a one-codon backward translocation of tRNAs on improperly translocated ribosomes. Back-translocation proceeds from a post-translocation (POST) complex to a pre-translocation (PRE) complex, thus giving elongation factor G a second chance to translocate the tRNAs correctly. Binds to ribosomes in a GTP-dependent manner. This Rhodopirellula baltica (strain DSM 10527 / NCIMB 13988 / SH1) protein is Elongation factor 4 2.